We begin with the raw amino-acid sequence, 203 residues long: Large ribosomal subunit protein uL13 (203 aa).

Alanine 2 bears the N-acetylalanine mark. Citrulline is present on arginine 59. Serine 77 carries the post-translational modification Phosphoserine; by ZIPK/DAPK3. Citrulline is present on arginine 140. At lysine 191 the chain carries N6-acetyllysine.

This sequence belongs to the universal ribosomal protein uL13 family. Component of the 60S ribosome. Component of the GAIT complex. Interacts with EIF4G1. Phosphorylation at Ser-77 upon interferon-gamma treatment in macrophages involves a DAPK1-DAPK3 kinase cascade and is causing release from the ribosome, association with the GAIT complex and subsequent involvement in transcript-selective translation inhibition. In terms of processing, citrullinated by PADI4.

The protein localises to the cytoplasm. Associated with ribosomes but is not required for canonical ribosome function and has extra-ribosomal functions. Component of the GAIT (gamma interferon-activated inhibitor of translation) complex which mediates interferon-gamma-induced transcript-selective translation inhibition in inflammation processes. Upon interferon-gamma activation and subsequent phosphorylation dissociates from the ribosome and assembles into the GAIT complex which binds to stem loop-containing GAIT elements in the 3'-UTR of diverse inflammatory mRNAs (such as ceruplasmin) and suppresses their translation. In the GAIT complex interacts with m7G cap-bound eIF4G at or near the eIF3-binding site and blocks the recruitment of the 43S ribosomal complex. Involved in methylation of rRNA. In Mus musculus (Mouse), this protein is Large ribosomal subunit protein uL13 (Rpl13a).